We begin with the raw amino-acid sequence, 433 residues long: Lipase 2 (433 aa).

The short motif at 165–167 (HGG) is the Involved in the stabilization of the negatively charged intermediate by the formation of the oxyanion hole element. Catalysis depends on serine 239, which acts as the Charge relay system. Active-site residues include aspartate 361 and histidine 391.

This sequence belongs to the 'GDXG' lipolytic enzyme family.

The enzyme catalyses a triacylglycerol + H2O = a diacylglycerol + a fatty acid + H(+). In Moraxella sp. (strain TA144), this protein is Lipase 2 (lip2).